The primary structure comprises 359 residues: DNA polymerase IV (359 aa).

The 182-residue stretch at 4-185 folds into the UmuC domain; it reads IIHIDMDCYF…LPLSKIPGVG (182 aa). Mg(2+) is bound by residues D8 and D103. The active site involves E104.

Belongs to the DNA polymerase type-Y family. Monomer. Mg(2+) is required as a cofactor.

The protein localises to the cytoplasm. It carries out the reaction DNA(n) + a 2'-deoxyribonucleoside 5'-triphosphate = DNA(n+1) + diphosphate. Poorly processive, error-prone DNA polymerase involved in untargeted mutagenesis. Copies undamaged DNA at stalled replication forks, which arise in vivo from mismatched or misaligned primer ends. These misaligned primers can be extended by PolIV. Exhibits no 3'-5' exonuclease (proofreading) activity. May be involved in translesional synthesis, in conjunction with the beta clamp from PolIII. In Shewanella frigidimarina (strain NCIMB 400), this protein is DNA polymerase IV.